A 438-amino-acid chain; its full sequence is V-type ATP synthase beta chain (438 aa).

The protein belongs to the ATPase alpha/beta chains family.

In terms of biological role, produces ATP from ADP in the presence of a proton gradient across the membrane. The V-type beta chain is a regulatory subunit. This is V-type ATP synthase beta chain from Chlamydia trachomatis serovar A (strain ATCC VR-571B / DSM 19440 / HAR-13).